Consider the following 891-residue polypeptide: Inter-alpha-trypsin inhibitor heavy chain H3 (891 aa).

The signal sequence occupies residues 1 to 20; sequence MALAQWPYLILALLSGLAVS. Positions 21-34 are excised as a propeptide; it reads GFPRNPSLLLGKRS. Residues 29-158 form the VIT domain; it reads LLGKRSLPGR…KVTFELTYEE (130 aa). Residue Asn-91 is glycosylated (N-linked (GlcNAc...) asparagine). In terms of domain architecture, VWFA spans 284–467; the sequence is SVVFVIDVSG…LQLQGFYEEV (184 aa). Asp-651 carries the post-translational modification Aspartate 1-(chondroitin 4-sulfate)-ester. Positions 652 to 891 are excised as a propeptide; the sequence is PHFIIQIPEK…HRDYIVPNLF (240 aa).

The protein belongs to the ITIH family. I-alpha-I plasma protease inhibitors are assembled from one or two heavy chains (H1, H2 or H3) and one light chain, bikunin. Inter-alpha-inhibitor (I-alpha-I) is composed of H1, H2 and bikunin, inter-alpha-like inhibitor (I-alpha-LI) of H2 and bikunin, and pre-alpha-inhibitor (P-alpha-I) of H3 and bikunin.

It is found in the secreted. In terms of biological role, may act as a carrier of hyaluronan in serum or as a binding protein between hyaluronan and other matrix protein, including those on cell surfaces in tissues to regulate the localization, synthesis and degradation of hyaluronan which are essential to cells undergoing biological processes. In Bos taurus (Bovine), this protein is Inter-alpha-trypsin inhibitor heavy chain H3 (ITIH3).